The chain runs to 209 residues: Cerebral peptide 1 (209 aa).

The N-terminal stretch at 1 to 20 (MLLAKISVVVLLLAIDGTSS) is a signal peptide. The segment covering 21 to 39 (SESTDNVVLSSSPDSQKAA) has biased composition (polar residues). A propeptide spans 21-43 (SESTDNVVLSSSPDSQKAATSRH) (connecting peptide 1). Residues 21–56 (SESTDNVVLSSSPDSQKAATSRHKRAPGWGKRSSLN) form a disordered region. W49 is subject to Tryptophan amide. Residues 53–77 (SSLNDEDLFADSDSAQELLDSVAAL) constitute a propeptide, connecting peptide 2. Tryptophan amide occurs at positions 83 and 105. The segment at 98–169 (EAKRAPGWGK…APGWGKRSGG (72 aa)) is disordered. Positions 109–122 (GQEIDVDEDGSEQE) are cleaved as a propeptide — connecting peptide 4. Tryptophan amide occurs at positions 128, 135, 142, 149, 156, and 163. Residues 167–191 (SGGDYCETLEKMVDAYIYKAVEVDS) constitute a propeptide, connecting peptide 5. C172 and C197 are disulfide-bonded.

Homodimer; disulfide-linked. As to expression, cerebral peptide 1 is expressed in the cerebral, pedal and buccal ganglia and B1 and B2 neurons. APGW-amide is expressed in buccal ganglia and several neurons.

It is found in the secreted. Its function is as follows. May function as a peptide transmitter. The sequence is that of Cerebral peptide 1 from Aplysia californica (California sea hare).